The following is a 430-amino-acid chain: MEF2-activating motif and SAP domain-containing transcriptional regulator (430 aa).

Positions I12–R28 match the MEF2-binding motif. Disordered regions lie at residues C84–H172, K204–P239, V280–S301, and E330–D416. The span at L87–P103 shows a compositional bias: basic and acidic residues. Pro residues predominate over residues Q147–L170. The 35-residue stretch at L181–A215 folds into the SAP domain. Residues L207–S228 are compositionally biased toward basic and acidic residues. Residues R224–W430 form a transcription activation region. 2 stretches are compositionally biased toward low complexity: residues S363–P373 and A393–G403.

In terms of assembly, interacts with MEF2C.

The protein resides in the nucleus. Its function is as follows. Transcriptional coactivator. Stimulates the transcriptional activity of MEF2C. Stimulates MYOD1 activity in part via MEF2, resulting in an enhancement of skeletal muscle differentiation. This is MEF2-activating motif and SAP domain-containing transcriptional regulator (MAMSTR) from Bos taurus (Bovine).